We begin with the raw amino-acid sequence, 409 residues long: Fructose-1,6-bisphosphatase, chloroplastic (409 aa).

A chloroplast-targeting transit peptide spans 1 to 49; that stretch reads MAAATTTTSRPLLLSRQQAAASSLQCRLPRRPGSSLFAGQGQASTPNVR. The Mg(2+) site is built by E131, E160, D181, L183, and D184. 184-187 serves as a coordination point for substrate; it reads DGSS. A disulfide bridge connects residues C223 and C228. N287, Y319, Y337, Y339, and K349 together coordinate substrate. E355 is a binding site for Mg(2+).

The protein belongs to the FBPase class 1 family. In terms of assembly, homotetramer. Requires Mg(2+) as cofactor. In photosynthetically active tissues, and in the shoot and root apical meristems.

The protein localises to the plastid. It localises to the chloroplast. The enzyme catalyses beta-D-fructose 1,6-bisphosphate + H2O = beta-D-fructose 6-phosphate + phosphate. It functions in the pathway carbohydrate biosynthesis; Calvin cycle. In Triticum aestivum (Wheat), this protein is Fructose-1,6-bisphosphatase, chloroplastic (FBP).